A 424-amino-acid polypeptide reads, in one-letter code: UDP-N-acetylglucosamine 1-carboxyvinyltransferase (424 aa).

22 to 23 (KN) is a binding site for phosphoenolpyruvate. Position 98 (R98) interacts with UDP-N-acetyl-alpha-D-glucosamine. The active-site Proton donor is the C122. At C122 the chain carries 2-(S-cysteinyl)pyruvic acid O-phosphothioketal. UDP-N-acetyl-alpha-D-glucosamine-binding positions include 127 to 131 (RPVDQ), D312, and I334.

Belongs to the EPSP synthase family. MurA subfamily.

The protein localises to the cytoplasm. The catalysed reaction is phosphoenolpyruvate + UDP-N-acetyl-alpha-D-glucosamine = UDP-N-acetyl-3-O-(1-carboxyvinyl)-alpha-D-glucosamine + phosphate. It participates in cell wall biogenesis; peptidoglycan biosynthesis. Its function is as follows. Cell wall formation. Adds enolpyruvyl to UDP-N-acetylglucosamine. The polypeptide is UDP-N-acetylglucosamine 1-carboxyvinyltransferase (Xanthomonas campestris pv. campestris (strain 8004)).